A 266-amino-acid polypeptide reads, in one-letter code: Glucosamine-6-phosphate deaminase (266 aa).

The active-site Proton acceptor; for enolization step is the Asp72. The For ring-opening step role is filled by Asp141. Catalysis depends on His143, which acts as the Proton acceptor; for ring-opening step. Glu148 acts as the For ring-opening step in catalysis.

It belongs to the glucosamine/galactosamine-6-phosphate isomerase family. NagB subfamily. As to quaternary structure, homohexamer.

It catalyses the reaction alpha-D-glucosamine 6-phosphate + H2O = beta-D-fructose 6-phosphate + NH4(+). Its pathway is amino-sugar metabolism; N-acetylneuraminate degradation; D-fructose 6-phosphate from N-acetylneuraminate: step 5/5. Its activity is regulated as follows. Allosterically activated by N-acetylglucosamine 6-phosphate (GlcNAc6P). Functionally, catalyzes the reversible isomerization-deamination of glucosamine 6-phosphate (GlcN6P) to form fructose 6-phosphate (Fru6P) and ammonium ion. This Vibrio cholerae serotype O1 (strain ATCC 39541 / Classical Ogawa 395 / O395) protein is Glucosamine-6-phosphate deaminase.